A 429-amino-acid polypeptide reads, in one-letter code: Chaperone SurA (429 aa).

A signal peptide spans 1 to 19; the sequence is MKKTLLALLIASVMQSALA. PpiC domains are found at residues 172–273 and 283–381; these read RTEY…KLVD and VEQY…LVEG.

The protein localises to the periplasm. The enzyme catalyses [protein]-peptidylproline (omega=180) = [protein]-peptidylproline (omega=0). In terms of biological role, chaperone involved in the correct folding and assembly of outer membrane proteins. Recognizes specific patterns of aromatic residues and the orientation of their side chains, which are found more frequently in integral outer membrane proteins. May act in both early periplasmic and late outer membrane-associated steps of protein maturation. This Chromobacterium violaceum (strain ATCC 12472 / DSM 30191 / JCM 1249 / CCUG 213 / NBRC 12614 / NCIMB 9131 / NCTC 9757 / MK) protein is Chaperone SurA.